The sequence spans 247 residues: RNA-free ribonuclease P (247 aa).

Residues 223-247 (SPEGEKEKGEADKKKKSHSEEAEFI) form a disordered region.

Belongs to the HARP family.

The enzyme catalyses Endonucleolytic cleavage of RNA, removing 5'-extranucleotides from tRNA precursor.. Functionally, RNA-free RNase P that catalyzes the removal of the 5'-leader sequence from pre-tRNA to produce the mature 5'-terminus. This Methanosarcina acetivorans (strain ATCC 35395 / DSM 2834 / JCM 12185 / C2A) protein is RNA-free ribonuclease P.